Here is a 274-residue protein sequence, read N- to C-terminus: Undecaprenyl-diphosphatase (274 aa).

8 consecutive transmembrane segments (helical) span residues 1–21 (MDWL…FLPI), 42–62 (VKDT…LVYY), 81–101 (LWLG…LFGD), 107–127 (LFRP…MWLL), 142–162 (ISAG…LWPG), 184–204 (TKFS…LDFI), 213–233 (IGVV…YFAI), and 248–268 (FAVY…RGVL).

This sequence belongs to the UppP family.

The protein resides in the cell membrane. It catalyses the reaction di-trans,octa-cis-undecaprenyl diphosphate + H2O = di-trans,octa-cis-undecaprenyl phosphate + phosphate + H(+). Functionally, catalyzes the dephosphorylation of undecaprenyl diphosphate (UPP). Confers resistance to bacitracin. The chain is Undecaprenyl-diphosphatase from Deinococcus radiodurans (strain ATCC 13939 / DSM 20539 / JCM 16871 / CCUG 27074 / LMG 4051 / NBRC 15346 / NCIMB 9279 / VKM B-1422 / R1).